Consider the following 234-residue polypeptide: UPF0502 protein BTH_II0990 (234 aa).

It belongs to the UPF0502 family.

This chain is UPF0502 protein BTH_II0990, found in Burkholderia thailandensis (strain ATCC 700388 / DSM 13276 / CCUG 48851 / CIP 106301 / E264).